The chain runs to 236 residues: Small ribosomal subunit protein uS2c (236 aa).

This sequence belongs to the universal ribosomal protein uS2 family.

The protein localises to the plastid. Its subcellular location is the chloroplast. The chain is Small ribosomal subunit protein uS2c (rps2) from Acorus calamus var. americanus (American sweet flag).